A 456-amino-acid polypeptide reads, in one-letter code: Tyrosine phenol-lyase (456 aa).

Position 257 is an N6-(pyridoxal phosphate)lysine (K257).

Belongs to the beta-eliminating lyase family. In terms of assembly, homotetramer. Pyridoxal 5'-phosphate serves as cofactor.

It catalyses the reaction L-tyrosine + H2O = phenol + pyruvate + NH4(+). This Citrobacter freundii protein is Tyrosine phenol-lyase (tpl).